The primary structure comprises 507 residues: Cuticlin-4 (507 aa).

A signal peptide spans 1–19; it reads MFHFTRILAAFLLPTLCFC. Topologically, residues 20–471 are extracellular; it reads GYSTAPSSTV…KTCFSTSRMY (452 aa). One can recognise a ZP domain in the interval 42 to 280; it reads VCETASISLL…YGCSNTQPQC (239 aa). A disordered region spans residues 292–350; it reads KTTETAEPYPYDSHESGYPTRPANYPVASSRYPIPTTQAPASYPSSPAPPPPGADIDNG. Residues asparagine 374 and asparagine 408 are each glycosylated (N-linked (GlcNAc...) asparagine). A helical membrane pass occupies residues 472-492; sequence FTLILLCLLFATTVVVFIVIV. The Cytoplasmic segment spans residues 493–507; sequence QKQRQILAQTAFFKP.

It is found in the cell membrane. Plays a role in alae formation and subsequent cuticle attachment in adults. The polypeptide is Cuticlin-4 (Caenorhabditis elegans).